Reading from the N-terminus, the 273-residue chain is MATTGEALNASEYIQHHLTNAKMCSTDGGVAFNHACQDAGFWTWHIDSLLFSVGLGVLFLWLFYKTGQKATAGVPGKLQCFVEMCVEGVDKIAKESFHGKNVVIAPLALTIFIWVFLMNFMDLIPVDFIPEAANRFLGVPYLKVVPTTDLNVTLGLSLSVFVLIVFYSIKAKGIGGFTKELTLQPFNHWSLIPVNFILESVTLIAKPISLALRLFGNLYAGELIFILIALMPWWAQFALSVPWAIFHILIIVLQAFIFMMLTIVYLSMAHEEH.

The next 5 membrane-spanning stretches (helical) occupy residues 44-64, 104-124, 149-169, 223-243, and 244-264; these read WHIDSLLFSVGLGVLFLWLFY, IAPLALTIFIWVFLMNFMDLI, DLNVTLGLSLSVFVLIVFYSI, LIFILIALMPWWAQFALSVPW, and AIFHILIIVLQAFIFMMLTIV.

The protein belongs to the ATPase A chain family. In terms of assembly, F-type ATPases have 2 components, CF(1) - the catalytic core - and CF(0) - the membrane proton channel. CF(1) has five subunits: alpha(3), beta(3), gamma(1), delta(1), epsilon(1). CF(0) has three main subunits: a(1), b(2) and c(9-12). The alpha and beta chains form an alternating ring which encloses part of the gamma chain. CF(1) is attached to CF(0) by a central stalk formed by the gamma and epsilon chains, while a peripheral stalk is formed by the delta and b chains.

It is found in the cell inner membrane. In terms of biological role, key component of the proton channel; it plays a direct role in the translocation of protons across the membrane. This is ATP synthase subunit a from Shewanella putrefaciens (strain CN-32 / ATCC BAA-453).